The chain runs to 215 residues: Ion-translocating oxidoreductase complex subunit G (215 aa).

Residues 9-29 traverse the membrane as a helical segment; it reads GLLLSGFALICTAAVALVNEA. Position 176 is an FMN phosphoryl threonine (Thr-176).

The protein belongs to the RnfG family. The complex is composed of six subunits: RnfA, RnfB, RnfC, RnfD, RnfE and RnfG. FMN is required as a cofactor.

Its subcellular location is the cell inner membrane. In terms of biological role, part of a membrane-bound complex that couples electron transfer with translocation of ions across the membrane. The polypeptide is Ion-translocating oxidoreductase complex subunit G (Shewanella amazonensis (strain ATCC BAA-1098 / SB2B)).